A 351-amino-acid polypeptide reads, in one-letter code: CCN family member 3 (351 aa).

Positions 1–24 (METGGGQGLPVLLLLLLLLRPCEV) are cleaved as a signal peptide. Positions 27–101 (REAACPRPCG…GGGAGICMVL (75 aa)) constitute an IGFBP N-terminal domain. 6 cysteine pairs are disulfide-bonded: Cys31/Cys57, Cys35/Cys59, Cys39/Cys60, Cys46/Cys63, Cys71/Cys85, and Cys77/Cys98. In terms of domain architecture, VWFC spans 104–170 (DNCVFDGMIY…GECCEKWVCD (67 aa)). The 46-residue stretch at 201–246 (NCIEQTTEWSACSKSCGMGFSTRVTNRNQQCEMVKQTRLCMMRPCE) folds into the TSP type-1 domain. Disulfide bonds link Cys258/Cys295, Cys275/Cys309, Cys286/Cys325, Cys289/Cys327, and Cys294/Cys331. Residues 258 to 332 (CIQTKKSMKA…NTCVCHGNCP (75 aa)) form the CTCK domain. N-linked (GlcNAc...) asparagine glycosylation occurs at Asn274.

The protein belongs to the CCN family. Brain and heart, and at a lower level in muscle and intestine, in the embryo. Lung and less so in brain and spleen, in adult chicken.

The protein localises to the secreted. Its subcellular location is the cytoplasm. The protein resides in the cell junction. It is found in the gap junction. Immediate-early protein likely to play a role in cell growth regulation. Its overexpression is associated with tumorigenesis and expression of a N-terminal-truncated version of CCN3 gene in chicken embryonic fibroblasts (CEF) is sufficient to induce the transformation of CEF in vitro. The polypeptide is CCN family member 3 (CCN3) (Gallus gallus (Chicken)).